We begin with the raw amino-acid sequence, 786 residues long: MASQRQPPSSSNAFSFLSKGWREVRDSADADLQLMKDRANSFKNLATSFDRELENFFNSAAPAFSVPAMRSASPPPAEIEFVKKLQPKLSEFRRAYSSPDFSKKVLEKWRPRARIRIDLSAIKNAIVSEEIDEGIVDFERGKRERRLSFWEELKGEGEAQDWEPIRALKTRLKEFEKRSSSVEFFDGFKNSEFLEKVKSSLKSMCKEPRDSKEVPPLDVAELLAYFVKQSGPFLDQLGVRRDVCDKIVESLYSKRKNQLLLPSLSGEESSLLGNGNINDELDLRIASVLQSTGHRNEGGFWTDHAKHDLSDNERHVAIVTTASLPWMTGTAVNPLFRAAYLSQSEKQKVTLLVPWLCKSDQELVYPSNLTFTSPEEQEGYIRNWLEERIGFKADFKISFYPGKFSQARRSIIPAGDTAQFIPSKDADIAILEEPEHLNWYHHGTRWTDKFNHVVGIVHTNYLEYIKREKNGALQAFLVKHINNWVARAYCDKVLRLSAATQDLPKSVVCNVHGVNPKFLKIGESIAAERELGQKGFTKGAYFLGKMVWAKGYKELIDLLAKHKADLDGVKLDVFGNGEDANEVQSAARRFDLNLNFQKGRDHADDSLHRYKVFINPSISDVLCTATAEALAMGKFVVCADHPSNEFFRSFPNCLTYKTPEDFAVKVKEALANEPYPLTPEQRYQLSWEAATQRFMEYSELDKVLNKEKDGAKPSKNNRKIMAKSASMPNLTELVDGGLAFAHYCLTGNEFLRLCTGATPGTRDYDKQHCKDLNLLPPQVENPIYGW.

Residues methionine 1–arginine 25 constitute a chloroplast transit peptide.

Belongs to the glycosyltransferase group 1 family. Glycosyltransferase 4 subfamily. As to expression, high expression in nodules infected cells, but low in nodule inner cortex and root central cylinder.

Its subcellular location is the plastid. The protein resides in the chloroplast outer membrane. It is found in the plastid outer membrane. The catalysed reaction is a 1,2-diacyl-3-O-(beta-D-galactosyl)-sn-glycerol + UDP-alpha-D-galactose = a 1,2-diacyl-3-O-[alpha-D-galactosyl-(1-&gt;6)-beta-D-galactosyl]-sn-glycerol + UDP + H(+). Functionally, involved in the synthesis of diacylglycerol galactolipids that are specifically found in thylakoid and in nodule peribacteroid membranes. Specific for alpha-glycosidic linkages. This is Digalactosyldiacylglycerol synthase 1, chloroplastic from Lotus japonicus (Lotus corniculatus var. japonicus).